Here is a 198-residue protein sequence, read N- to C-terminus: Recombination protein RecR (198 aa).

Residues 57 to 72 (CSVCGHITDQDPCYIC) form a C4-type zinc finger. Residues 80 to 175 (SVICVVQDPK…KLSRIAHGLP (96 aa)) enclose the Toprim domain.

The protein belongs to the RecR family.

In terms of biological role, may play a role in DNA repair. It seems to be involved in an RecBC-independent recombinational process of DNA repair. It may act with RecF and RecO. This chain is Recombination protein RecR, found in Bacillus subtilis (strain 168).